The following is a 341-amino-acid chain: Methionine import ATP-binding protein MetN 3 (341 aa).

The 240-residue stretch at 2–241 folds into the ABC transporter domain; it reads IEFQNVTKTF…PSHETTKRFI (240 aa). Residue 38 to 45 participates in ATP binding; it reads GFSGAGKS.

It belongs to the ABC transporter superfamily. Methionine importer (TC 3.A.1.24) family. As to quaternary structure, the complex is composed of two ATP-binding proteins (MetN), two transmembrane proteins (MetI) and a solute-binding protein (MetQ).

The protein resides in the cell membrane. It catalyses the reaction L-methionine(out) + ATP + H2O = L-methionine(in) + ADP + phosphate + H(+). The enzyme catalyses D-methionine(out) + ATP + H2O = D-methionine(in) + ADP + phosphate + H(+). Its function is as follows. Part of the ABC transporter complex MetNIQ involved in methionine import. Responsible for energy coupling to the transport system. In Oceanobacillus iheyensis (strain DSM 14371 / CIP 107618 / JCM 11309 / KCTC 3954 / HTE831), this protein is Methionine import ATP-binding protein MetN 3.